Here is a 620-residue protein sequence, read N- to C-terminus: Preterminal protein (620 aa).

Positions 356-365 (RLPMRRRRRR) match the Nuclear localization signal motif. Position 545 is an O-(5'-phospho-DNA)-serine (serine 545).

It belongs to the adenoviridae terminal protein family. Heterodimer with the polymerase; this heterodimer binds to bp 9 to 18 of the genome. Interacts with host POU2F1; POU2F1 binds to the auxiliary sequences in the inverted terminal repeats and tethers the pTP-POL heterodimer to the origin DNA thereby participating in the assembly of the pre-initiation complex (POL-TP-DBP-NFIA-POU2F1). Preterminal protein is used to replicate viral genome, upon genomic encapsidation it is processed first into iTP and finally into TP by adenovirus protease.

It localises to the host nucleus matrix. In terms of biological role, protein covalently bound to the viral DNA that acts as a primer for viral genomic replication by DNA strand displacement. Assembles on the viral origin of replication in an initiation complex with viral polymerase, DBP, host NFIA and host POU2F1/OCT1. During initiation, the polymerase covalently couples the first dCTP with Ser-580 of pTP. The terminal protein stimulates the template activity over 20 fold compared to protein-free templates. Neo-synthesized viral genomes are linked to two preterminal proteins, one for each 5' end. These new genomes are encapsidated in the nucleus, and during capsid maturation by viral protease, preterminal protein is first cleaved into intermediary (iTP), then into mature TP. May play a role in host nuclear matrix localization of genomic DNA. The protein is Preterminal protein of Bovine adenovirus 2 (BAdV-2).